The chain runs to 179 residues: Large ribosomal subunit protein uL5 (179 aa).

The protein belongs to the universal ribosomal protein uL5 family. As to quaternary structure, part of the 50S ribosomal subunit; part of the 5S rRNA/L5/L18/L25 subcomplex. Contacts the 5S rRNA and the P site tRNA. Forms a bridge to the 30S subunit in the 70S ribosome.

Functionally, this is one of the proteins that bind and probably mediate the attachment of the 5S RNA into the large ribosomal subunit, where it forms part of the central protuberance. In the 70S ribosome it contacts protein S13 of the 30S subunit (bridge B1b), connecting the 2 subunits; this bridge is implicated in subunit movement. Contacts the P site tRNA; the 5S rRNA and some of its associated proteins might help stabilize positioning of ribosome-bound tRNAs. This is Large ribosomal subunit protein uL5 from Pasteurella multocida (strain Pm70).